The chain runs to 1141 residues: MAYKDARQVKIAEKLVILNDRAAGMMTRIYNIKKSSGDSKVKPQFLSDKKMEGAIKHIVRKFPVVDCRSNSSTFEYVQEKSTEITKSLSLYYYTFADILDLKDHIMQVLTTMESCQCQLDVTLNYDLTTSYLNLVVHLVTMMILLSRIEDRKAVLGLFNAAYDLQHGQSEASFPRLGQMILDYENPLKKLHEDLGPLNRLIYSALSSVTHTYQRRNKTADSWRTSNVFSLTAAPAQILYAAQTETIACEYLSLDVIDRWIVFCGTVCHSTLLNDDNIRHMWQLALQMNLCLRVFRDETFIVHQEIQAFLESSKEKSKRLQDVKDAFNHASVTAVAVHADRRRFLRSSLRELSLLLRDQPGLLGPKILYVWMALGAGRDEVIWLLRHQVEVPAISKKGSRMVEELVDRQLPELLFYMLELRDLVTKYYAVIQRYYLQYVSSYDSIVVSEEINQANGLTQEEAVLLTDFANEIGNINSDTDLRALRLDWFRFQAWTSAARSHFQLSRHKKLAIYMNTSVFHLKMIDLQDEMLRETSDLSLYCFYPKLAEKHWLNCLQLPAQARYVLSFARLAAHFTSALHDMCPEEKAFITEKALAQCNSVIEETCKQLSYILEKVAEHEFGLAYQMTPSAVAVRVVAQVVQQKGSGKAAAAAAAAARDYFIAGEESYRVDRQALTMPDKLQTTLLEISAALGAHRQIYVADHTFAPRTYLAQSLETKFVELLHGMFWEGQPHASNPKRPSEMLLALQAYMTVLQNLDTAISVDISNTMQTTLLQQTQLVDSKNKDTIAALYTKWYLEVLLRRASSGHMVWSEHLRTMLSSGQEQLSFMPDHYSDPQELRALVQIIGPYGVKLMTERLIWHVASQIMEMSKIVATYKDALQIARSNFDNAEKMKDVLNLLSVEPKDKKTPNATCAADAILQRTIIIGQICLFRDALHDALRHIVESKLPFLQASFDMLYHNLDDVDKVKIGEMSAAMGVTGPVDMSLVNAVRAQNPNIHPQEHYVNSCLLMVAVAICIPRIGMSDLSSYKPSIQASLNNSHCVPMAINTIGSALFHLHEQNDIQSRMKEFLALASSGILRTIHERDNSRQISDDVLRSHTTLYIILEQMVRKNRWLSMDVLETCFPYNLVRTAYQQCYEADAQ.

This sequence belongs to the HEM-1/HEM-2 family. In terms of assembly, interacts with aco-1, gei-13 and gex-2. Interacts with gex-3. As to expression, expressed in neurons.

The protein localises to the cytoplasm. Its function is as follows. Rac effector required for tissue morphogenesis, cell migrations and egg laying. May play a role in egg laying and in yolk protein clatherin-mediated endocytosis by oocytes during oogenesis. Plays a role in the formation of gap junctions between EA and EP endodermal precursor cells in embryos. This Caenorhabditis elegans protein is Membrane-associated protein gex-3.